Consider the following 305-residue polypeptide: UDP-3-O-acyl-N-acetylglucosamine deacetylase (305 aa).

The Zn(2+) site is built by histidine 79, histidine 238, and aspartate 242. Histidine 265 functions as the Proton donor in the catalytic mechanism.

The protein belongs to the LpxC family. It depends on Zn(2+) as a cofactor.

It catalyses the reaction a UDP-3-O-[(3R)-3-hydroxyacyl]-N-acetyl-alpha-D-glucosamine + H2O = a UDP-3-O-[(3R)-3-hydroxyacyl]-alpha-D-glucosamine + acetate. Its pathway is glycolipid biosynthesis; lipid IV(A) biosynthesis; lipid IV(A) from (3R)-3-hydroxytetradecanoyl-[acyl-carrier-protein] and UDP-N-acetyl-alpha-D-glucosamine: step 2/6. Catalyzes the hydrolysis of UDP-3-O-myristoyl-N-acetylglucosamine to form UDP-3-O-myristoylglucosamine and acetate, the committed step in lipid A biosynthesis. This Escherichia fergusonii (strain ATCC 35469 / DSM 13698 / CCUG 18766 / IAM 14443 / JCM 21226 / LMG 7866 / NBRC 102419 / NCTC 12128 / CDC 0568-73) protein is UDP-3-O-acyl-N-acetylglucosamine deacetylase.